The sequence spans 314 residues: Ribosomal RNA small subunit methyltransferase H (314 aa).

S-adenosyl-L-methionine is bound by residues 31–33 (GGY), D49, F76, D118, and Q125.

It belongs to the methyltransferase superfamily. RsmH family.

The protein localises to the cytoplasm. It catalyses the reaction cytidine(1402) in 16S rRNA + S-adenosyl-L-methionine = N(4)-methylcytidine(1402) in 16S rRNA + S-adenosyl-L-homocysteine + H(+). Its function is as follows. Specifically methylates the N4 position of cytidine in position 1402 (C1402) of 16S rRNA. This chain is Ribosomal RNA small subunit methyltransferase H, found in Wolbachia pipientis wMel.